A 207-amino-acid polypeptide reads, in one-letter code: Guanylate kinase (207 aa).

Positions 4–184 constitute a Guanylate kinase-like domain; the sequence is GILFIISAPS…AINDLRTIII (181 aa). 11-18 contributes to the ATP binding site; it reads APSGTGKS.

This sequence belongs to the guanylate kinase family.

It localises to the cytoplasm. It catalyses the reaction GMP + ATP = GDP + ADP. Functionally, essential for recycling GMP and indirectly, cGMP. The polypeptide is Guanylate kinase (Buchnera aphidicola subsp. Schizaphis graminum (strain Sg)).